Reading from the N-terminus, the 837-residue chain is Telomere length regulation protein TEL2 homolog (837 aa).

N-acetylmethionine is present on methionine 1. Hydroxyproline is present on residues proline 374, proline 419, and proline 422. Residues 444–472 (QPAGDGASEAGTSLVPATAEPPAETPAEI) are disordered. Residue serine 456 is modified to Phosphoserine. A compositionally biased stretch (low complexity) spans 459-471 (PATAEPPAETPAE). Serine 485 is modified (phosphoserine; by CK2). Phosphoserine occurs at positions 487 and 491. The tract at residues 627–651 (GCLGRTPQPGSPSPNTPCLPEAAVS) is disordered. Residues serine 688 and serine 836 each carry the phosphoserine modification.

It belongs to the TEL2 family. In terms of assembly, component of the TTT complex composed of TELO2, TTI1 and TTI2. Interacts with ATM, ATR, MTOR, PRKDC, RUVBL2, TTI1, TTI2, SMG1 and TRRAP. Component of the mTORC1 and mTORC2 complexes. Interacts (phosphorylated form) with PIH1D1 which mediates interaction of TELO2 with the R2TP complex composed of RUVBL1, RUVBL2, PIH1D1, and RPAP3. Hydroxylation by PHD3 is required for a proper interaction with ATR, and activation of the ATR/CHK1/p53 pathway following DNA damage. In terms of processing, phosphorylated at Ser-485 by CK2 following growth factor deprivation, leading to its subsequent ubiquitination by the SCF(FBXO9) complex. Phosphorylation by CK2 only takes place when TELO2 is bound to mTORC1, not mTORC2; leading to selective ubiquitination of mTORC1-associated protein. Post-translationally, ubiquitinated by the SCF(FBXO9) complex following phosphorylation by CK2 in response to growth factor deprivation, leading to its degradation by the proteasome. Only mTORC1-associated protein is ubiquitinated and degraded, leading to selective inactivation of mTORC1 to restrain cell growth and protein translation, while mTORC2 is activated due to the relief of feedback inhibition by mTORC1.

Its subcellular location is the cytoplasm. The protein localises to the membrane. It is found in the nucleus. The protein resides in the chromosome. It localises to the telomere. Its function is as follows. Regulator of the DNA damage response (DDR). Part of the TTT complex that is required to stabilize protein levels of the phosphatidylinositol 3-kinase-related protein kinase (PIKK) family proteins. The TTT complex is involved in the cellular resistance to DNA damage stresses, like ionizing radiation (IR), ultraviolet (UV) and mitomycin C (MMC). Together with the TTT complex and HSP90 may participate in the proper folding of newly synthesized PIKKs. Promotes assembly, stabilizes and maintains the activity of mTORC1 and mTORC2 complexes, which regulate cell growth and survival in response to nutrient and hormonal signals. May be involved in telomere length regulation. The chain is Telomere length regulation protein TEL2 homolog (TELO2) from Homo sapiens (Human).